The chain runs to 88 residues: Small ribosomal subunit protein uS15 (88 aa).

Belongs to the universal ribosomal protein uS15 family. As to quaternary structure, part of the 30S ribosomal subunit. Forms a bridge to the 50S subunit in the 70S ribosome, contacting the 23S rRNA.

In terms of biological role, one of the primary rRNA binding proteins, it binds directly to 16S rRNA where it helps nucleate assembly of the platform of the 30S subunit by binding and bridging several RNA helices of the 16S rRNA. Functionally, forms an intersubunit bridge (bridge B4) with the 23S rRNA of the 50S subunit in the ribosome. The chain is Small ribosomal subunit protein uS15 from Thermoanaerobacter pseudethanolicus (strain ATCC 33223 / 39E) (Clostridium thermohydrosulfuricum).